Reading from the N-terminus, the 473-residue chain is Hyaluronidase-2 (473 aa).

Residues 1 to 20 (MRAGLGPIITLALVLEVAWA) form the signal peptide. 2 cysteine pairs are disulfide-bonded: cysteine 47/cysteine 340 and cysteine 211/cysteine 227. Asparagine 74 and asparagine 103 each carry an N-linked (GlcNAc...) asparagine glycan. Catalysis depends on glutamate 135, which acts as the Proton donor. The N-linked (GlcNAc...) asparagine glycan is linked to asparagine 357. In terms of domain architecture, EGF-like spans 361-439 (ATQYCSWTQC…YLGWGGEQCQ (79 aa)). 3 cysteine pairs are disulfide-bonded: cysteine 365–cysteine 376, cysteine 370–cysteine 427, and cysteine 429–cysteine 438. Asparagine 390 carries N-linked (GlcNAc...) asparagine glycosylation. A lipid anchor (GPI-anchor amidated asparagine; alternate) is attached at asparagine 448. Residue asparagine 448 is glycosylated (N-linked (GlcNAc...) asparagine; alternate). The propeptide at 449-473 (ASRAWAGSHLTSLLGLVAVALTWTL) is removed in mature form.

The protein belongs to the glycosyl hydrolase 56 family. Interacts with MST1R. As to expression, widely expressed, with highest expression levels in kidney, lung and liver (at protein level).

It is found in the cell membrane. It catalyses the reaction Random hydrolysis of (1-&gt;4)-linkages between N-acetyl-beta-D-glucosamine and D-glucuronate residues in hyaluronate.. Its function is as follows. Catalyzes hyaluronan degradation into small fragments that are endocytosed and degraded in lysosomes by HYAL1 and exoglycosidases. Essential for the breakdown of extracellular matrix hyaluronan. The chain is Hyaluronidase-2 (Hyal2) from Mus musculus (Mouse).